The following is a 340-amino-acid chain: Glyceraldehyde-3-phosphate dehydrogenase (340 aa).

NAD(+) contacts are provided by residues T11–I12 and G109. Residue S138–N140 coordinates D-glyceraldehyde 3-phosphate. C139 (nucleophile) is an active-site residue. Position 167 (R167) interacts with NAD(+). H193–A194 contributes to the D-glyceraldehyde 3-phosphate binding site. Q300 is an NAD(+) binding site.

Belongs to the glyceraldehyde-3-phosphate dehydrogenase family. Homotetramer.

The protein resides in the cytoplasm. It catalyses the reaction D-glyceraldehyde 3-phosphate + phosphate + NADP(+) = (2R)-3-phospho-glyceroyl phosphate + NADPH + H(+). It carries out the reaction D-glyceraldehyde 3-phosphate + phosphate + NAD(+) = (2R)-3-phospho-glyceroyl phosphate + NADH + H(+). It functions in the pathway carbohydrate degradation; glycolysis; pyruvate from D-glyceraldehyde 3-phosphate: step 1/5. This is Glyceraldehyde-3-phosphate dehydrogenase from Saccharolobus islandicus (strain M.14.25 / Kamchatka #1) (Sulfolobus islandicus).